The primary structure comprises 443 residues: C4-dicarboxylate transport protein (443 aa).

Helical transmembrane passes span 10 to 30, 46 to 66, 78 to 98, 130 to 150, 152 to 172, 199 to 219, 224 to 244, 291 to 311, 332 to 352, and 354 to 374; these read SLYFQVIVAIAIGILLGHFYP, LIKMVIAPIIFCTVVSGIAGM, YALLYFEIVSTIALLIGLIVV, SIVGFILNIIPATIVGAFANG, ILQVLMFSVVFGFALHRLGAY, PLGALGAMAFTIGAYGVGSLV, LMICFYITCVVFVLVVLGAIC, VVGLVIPTGYSFNLDGTSIYL, ITLLLVLLLSSKGAAGVTGSG, and IVLAATLSAVGHLPVAGLALI. A disordered region spans residues 415-443; that stretch reads ELASGGRPITDTRETDDLGVAEGPAPSIK.

This sequence belongs to the dicarboxylate/amino acid:cation symporter (DAACS) (TC 2.A.23) family.

The protein resides in the cell inner membrane. In terms of biological role, responsible for the transport of dicarboxylates such as succinate, fumarate, and malate from the periplasm across the membrane. This Pseudomonas fluorescens (strain ATCC BAA-477 / NRRL B-23932 / Pf-5) protein is C4-dicarboxylate transport protein.